Here is a 179-residue protein sequence, read N- to C-terminus: Large ribosomal subunit protein uL5 (179 aa).

This sequence belongs to the universal ribosomal protein uL5 family. Part of the 50S ribosomal subunit; part of the 5S rRNA/L5/L18/L25 subcomplex. Contacts the 5S rRNA and the P site tRNA. Forms a bridge to the 30S subunit in the 70S ribosome.

This is one of the proteins that bind and probably mediate the attachment of the 5S RNA into the large ribosomal subunit, where it forms part of the central protuberance. In the 70S ribosome it contacts protein S13 of the 30S subunit (bridge B1b), connecting the 2 subunits; this bridge is implicated in subunit movement. Contacts the P site tRNA; the 5S rRNA and some of its associated proteins might help stabilize positioning of ribosome-bound tRNAs. This chain is Large ribosomal subunit protein uL5, found in Albidiferax ferrireducens (strain ATCC BAA-621 / DSM 15236 / T118) (Rhodoferax ferrireducens).